We begin with the raw amino-acid sequence, 245 residues long: tRNA (guanine-N(1)-)-methyltransferase (245 aa).

Residues Gly113 and 133-138 (IGDYVL) contribute to the S-adenosyl-L-methionine site.

It belongs to the RNA methyltransferase TrmD family. As to quaternary structure, homodimer.

The protein localises to the cytoplasm. It catalyses the reaction guanosine(37) in tRNA + S-adenosyl-L-methionine = N(1)-methylguanosine(37) in tRNA + S-adenosyl-L-homocysteine + H(+). Specifically methylates guanosine-37 in various tRNAs. This chain is tRNA (guanine-N(1)-)-methyltransferase, found in Actinobacillus succinogenes (strain ATCC 55618 / DSM 22257 / CCUG 43843 / 130Z).